Consider the following 251-residue polypeptide: Hydroxyacylglutathione hydrolase (251 aa).

The Zn(2+) site is built by His-53, His-55, Asp-57, His-58, His-110, Asp-127, and His-165.

The protein belongs to the metallo-beta-lactamase superfamily. Glyoxalase II family. As to quaternary structure, monomer. The cofactor is Zn(2+).

The enzyme catalyses an S-(2-hydroxyacyl)glutathione + H2O = a 2-hydroxy carboxylate + glutathione + H(+). It functions in the pathway secondary metabolite metabolism; methylglyoxal degradation; (R)-lactate from methylglyoxal: step 2/2. Thiolesterase that catalyzes the hydrolysis of S-D-lactoyl-glutathione to form glutathione and D-lactic acid. The chain is Hydroxyacylglutathione hydrolase from Buchnera aphidicola subsp. Acyrthosiphon pisum (strain APS) (Acyrthosiphon pisum symbiotic bacterium).